Reading from the N-terminus, the 98-residue chain is DNA-binding protein Fis (98 aa).

A DNA-binding region (H-T-H motif) is located at residues glutamine 74–lysine 93.

It belongs to the transcriptional regulatory Fis family. Homodimer.

Its function is as follows. Activates ribosomal RNA transcription. Plays a direct role in upstream activation of rRNA promoters. The sequence is that of DNA-binding protein Fis from Vibrio parahaemolyticus serotype O3:K6 (strain RIMD 2210633).